The following is a 125-amino-acid chain: MPTINQLVRKPRQMDVVKSKVPALEACPQKRGVCTRVYTTTPKKPNSALRKVAKVRLTNGFEVISYIGGEGHNLQEHSVVLIRGGRVKDLPGVRYHIVRGSLDLQGVKDRKQSRSKYGAKRPKKA.

Aspartate 89 is modified (3-methylthioaspartic acid). A disordered region spans residues 106 to 125; it reads GVKDRKQSRSKYGAKRPKKA. Residues 113–125 are compositionally biased toward basic residues; it reads SRSKYGAKRPKKA.

Belongs to the universal ribosomal protein uS12 family. As to quaternary structure, part of the 30S ribosomal subunit. Contacts proteins S8 and S17. May interact with IF1 in the 30S initiation complex.

Functionally, with S4 and S5 plays an important role in translational accuracy. In terms of biological role, interacts with and stabilizes bases of the 16S rRNA that are involved in tRNA selection in the A site and with the mRNA backbone. Located at the interface of the 30S and 50S subunits, it traverses the body of the 30S subunit contacting proteins on the other side and probably holding the rRNA structure together. The combined cluster of proteins S8, S12 and S17 appears to hold together the shoulder and platform of the 30S subunit. In Azoarcus sp. (strain BH72), this protein is Small ribosomal subunit protein uS12.